The chain runs to 212 residues: Thymidylate kinase (212 aa).

7–14 (GIEGSGKS) contacts ATP.

It belongs to the thymidylate kinase family.

It carries out the reaction dTMP + ATP = dTDP + ADP. Phosphorylation of dTMP to form dTDP in both de novo and salvage pathways of dTTP synthesis. The polypeptide is Thymidylate kinase (Oleidesulfovibrio alaskensis (strain ATCC BAA-1058 / DSM 17464 / G20) (Desulfovibrio alaskensis)).